Consider the following 723-residue polypeptide: Heme/hemopexin utilization protein C (723 aa).

A signal peptide spans 1–21 (MRFSKLSLAITTTLVTANALA). A TBDR plug domain is found at 36-147 (DPSRFAYTPE…LGGVVAMRTP (112 aa)). The TBDR beta-barrel domain occupies 158 to 723 (KFGVKIRQGY…NAKISAVYSF (566 aa)). The TonB C-terminal box signature appears at 706 to 723 (SLMEGTGRNAKISAVYSF).

The protein belongs to the TonB-dependent receptor family.

The protein localises to the cell outer membrane. In terms of biological role, required for utilization of free heme at low concentrations. The polypeptide is Heme/hemopexin utilization protein C (hxuC) (Haemophilus influenzae (strain ATCC 51907 / DSM 11121 / KW20 / Rd)).